The following is a 105-amino-acid chain: Nitrogenase-stabilizing/protective protein NifW (105 aa).

This sequence belongs to the NifW family. As to quaternary structure, homotrimer; associates with NifD.

Its function is as follows. May protect the nitrogenase Fe-Mo protein from oxidative damage. The chain is Nitrogenase-stabilizing/protective protein NifW from Rhodospirillum centenum (strain ATCC 51521 / SW).